The sequence spans 1178 residues: MLEGCILPDFGQSKTDVSPSQSRPQSSPNNSVPGAPNRISFAKLREPLEVPGLLDVQTDSFEWLIGSPCWRAAAASRGDLKPVGGLEEVLYELSPIEDFSGSMSLSFSDPRFDEVKAPVEECKDKDMTYAAPLFVTAEFINNNTGEIKSQTVFMGDFPMMTEKGTFIINGTERVVVSQLVRSPGVYFDETIDKSTEKTLHSVKVIPSRGAWLEFDVDKRDTVGVRIDRKRRQPVTVLLKALGWTSEQITERFGFSEIMRSTLEKDNTVGTDEALLDIYRKLRPGEPPTKESAQTLLENLFFKEKRYDLARVGRYKVNKKLGLHAGELITSSTLTEEDVVATIEYLVRLHEGQSTMTVPGGVEVPVETDDIDHFGNRRLRTVGELIQNQIRVGMSRMERVVRERMTTQDVEAITPQTLINIRPVVAAIKEFFGTSQLSQFMDQNNPLSGLTHKRRLSALGPGGLSRERAGLEVRDVHPSHYGRMCPIETPEGPNIGLIGSLSVYARVNPFGFIETPYRKVVDGVVSDEIEYLTADEEDRHVVAQANSPIDEAGRFLEPRVLVRRKAGEVEYVASSEVDYMDVSPRQMVSVATAMIPFLEHDDANRALMGANMQRQAVPLVRSEAPLVGTGMELRAAIDAGHVVVAEKSGVIEEVSADYITVMADDGTRRTYRMRKFARSNHGTCANQSPIVDAGDRVEAGQVIADGPCTENGEMALGKNLLVAIMPWEGHNYEDAIILSNRLVEEDVLTSIHIEEHEIDARDTKLGAEEITRDIPNVSDEVLADLDERGIVRIGAEVRDGDILVGKVTPKGETELTPEERLLRAIFGEKAREVRDTSLKVPHGESGKVIGIRVFSHEDDDELPAGVNELVRVYVAQKRKISDGDKLAGRHGNKGVIGKILPAEDMPFLPDGTPVDIILNTHGVPRRMNVGQILETHLGWVAKSGWKIDVAGGIPDWAVNLPEELLHAAPNQIVSTPVFDGAKEEELQGLLSSTLPNRDGDVMVGGDGKAVLFDGRSGEPFPYPVTVGYMYIMKLHHLVDDKIHARSTGPYSMITQQPLGGKAQFGGQRFGEMECWAMQAYGAAYTLQELLTIKSDDTVGRVKVYEAIVKGENIPEPGIPESFKVLLKELQSLCLNVEVLSSDGAAIELREGEDEDLERAAANLGINLSRNESASIEDLA.

The segment at 1–37 (MLEGCILPDFGQSKTDVSPSQSRPQSSPNNSVPGAPN) is disordered. Residues 17–33 (VSPSQSRPQSSPNNSVP) show a composition bias toward low complexity.

It belongs to the RNA polymerase beta chain family. In terms of assembly, the RNAP catalytic core consists of 2 alpha, 1 beta, 1 beta' and 1 omega subunit. When a sigma factor is associated with the core the holoenzyme is formed, which can initiate transcription.

It carries out the reaction RNA(n) + a ribonucleoside 5'-triphosphate = RNA(n+1) + diphosphate. Its function is as follows. DNA-dependent RNA polymerase catalyzes the transcription of DNA into RNA using the four ribonucleoside triphosphates as substrates. This is DNA-directed RNA polymerase subunit beta from Mycobacterium leprae (strain Br4923).